A 198-amino-acid polypeptide reads, in one-letter code: Outer-membrane lipoprotein carrier protein (198 aa).

Positions 1 to 17 (MKKFLFSLCLLSSTVLA) are cleaved as a signal peptide.

The protein belongs to the LolA family. In terms of assembly, monomer.

The protein resides in the periplasm. Its function is as follows. Participates in the translocation of lipoproteins from the inner membrane to the outer membrane. Only forms a complex with a lipoprotein if the residue after the N-terminal Cys is not an aspartate (The Asp acts as a targeting signal to indicate that the lipoprotein should stay in the inner membrane). This is Outer-membrane lipoprotein carrier protein from Aliivibrio fischeri (strain ATCC 700601 / ES114) (Vibrio fischeri).